The following is a 488-amino-acid chain: Endoglucanase A (488 aa).

Substrate is bound by residues His-59, 63-64 (WY), Tyr-90, and His-125. Glu-163 acts as the Proton donor in catalysis. Substrate is bound at residue Tyr-226. The active-site Nucleophile is Glu-252. Residues 258 to 259 (AT), Trp-286, and 291 to 293 (KDE) each bind substrate. Disordered regions lie at residues 326 to 362 (ESAS…AWDP) and 388 to 451 (EPGA…WDPT). Composition is skewed to pro residues over residues 332 to 353 (PSDP…PPSD) and 405 to 416 (PSEPSDPPPPSE). Residues 417–433 (PEPDPGEPDPGEPDPGE) show a composition bias toward acidic residues.

It belongs to the glycosyl hydrolase 5 (cellulase A) family.

It catalyses the reaction Endohydrolysis of (1-&gt;4)-beta-D-glucosidic linkages in cellulose, lichenin and cereal beta-D-glucans.. This chain is Endoglucanase A (celA), found in Evansella cellulosilytica (strain ATCC 21833 / DSM 2522 / FERM P-1141 / JCM 9156 / N-4) (Bacillus cellulosilyticus).